A 273-amino-acid polypeptide reads, in one-letter code: Proteasome subunit beta (273 aa).

Positions 1-50 are cleaved as a propeptide — removed in mature form; by autocatalysis; the sequence is MRKDGARLALPLFDPRHDPGPDFAALVSRDAARTVPTSGDGSLGAQVPHG. The active-site Nucleophile is T51.

It belongs to the peptidase T1B family. The 20S proteasome core is composed of 14 alpha and 14 beta subunits that assemble into four stacked heptameric rings, resulting in a barrel-shaped structure. The two inner rings, each composed of seven catalytic beta subunits, are sandwiched by two outer rings, each composed of seven alpha subunits. The catalytic chamber with the active sites is on the inside of the barrel. Has a gated structure, the ends of the cylinder being occluded by the N-termini of the alpha-subunits. Is capped by the proteasome-associated ATPase, ARC.

The protein resides in the cytoplasm. The catalysed reaction is Cleavage of peptide bonds with very broad specificity.. It participates in protein degradation; proteasomal Pup-dependent pathway. The formation of the proteasomal ATPase ARC-20S proteasome complex, likely via the docking of the C-termini of ARC into the intersubunit pockets in the alpha-rings, may trigger opening of the gate for substrate entry. Interconversion between the open-gate and close-gate conformations leads to a dynamic regulation of the 20S proteasome proteolysis activity. In terms of biological role, component of the proteasome core, a large protease complex with broad specificity involved in protein degradation. The protein is Proteasome subunit beta of Acidimicrobium ferrooxidans (strain DSM 10331 / JCM 15462 / NBRC 103882 / ICP).